The primary structure comprises 465 residues: UDP-N-acetylmuramoylalanine--D-glutamate ligase (465 aa).

115–121 contacts ATP; the sequence is GTDGKTT.

This sequence belongs to the MurCDEF family.

It localises to the cytoplasm. The enzyme catalyses UDP-N-acetyl-alpha-D-muramoyl-L-alanine + D-glutamate + ATP = UDP-N-acetyl-alpha-D-muramoyl-L-alanyl-D-glutamate + ADP + phosphate + H(+). Its pathway is cell wall biogenesis; peptidoglycan biosynthesis. In terms of biological role, cell wall formation. Catalyzes the addition of glutamate to the nucleotide precursor UDP-N-acetylmuramoyl-L-alanine (UMA). This is UDP-N-acetylmuramoylalanine--D-glutamate ligase from Chlorobaculum tepidum (strain ATCC 49652 / DSM 12025 / NBRC 103806 / TLS) (Chlorobium tepidum).